The primary structure comprises 418 residues: MFNRPKGTRDFAPSEMKKRKIIENKLKSVFMAYNFNEINTPTFEYFELLSKKTGEDIRKQLFVFKDHGNREMGLRPEITSSVVRFYINELKNLPKPQKLFYFANCFRYEQPQAGRYREFWQMGCELLGSKNPIADAEVINLAMDGLNKINMDYEIHIGHLGVLKGVFEEFGLTEDEELKIRRLIDKEDYENLEKCLIELEENKNIIIKDIIFSVLNSKGTVEEVIGNLKEILKNYPKSIEALNNLEEIMEFVKRNNYIINLGIARGLDYYTGMVFEVYGKKEGARQVCGGGRYDNLIELFEGAPTPAVGFAYGFDRIMLNIDDFEVEDKRILIVPIKKDKKLLKECLIIADKLREMEKIVEVDLMNRKLNKALNYANTVGISKVIMIGEKELNERKISIKDMETGEQKLIDLEELSNI.

The protein belongs to the class-II aminoacyl-tRNA synthetase family.

Its subcellular location is the cytoplasm. The enzyme catalyses tRNA(His) + L-histidine + ATP = L-histidyl-tRNA(His) + AMP + diphosphate + H(+). The sequence is that of Histidine--tRNA ligase from Methanococcus aeolicus (strain ATCC BAA-1280 / DSM 17508 / OCM 812 / Nankai-3).